The sequence spans 296 residues: Haloalkane dehalogenase (296 aa).

Residues 31–155 (PILFQHGNPT…QDRDLFQAFR (125 aa)) form the AB hydrolase-1 domain. The active-site Nucleophile is the aspartate 108. The active-site Proton donor is glutamate 132. Histidine 272 acts as the Proton acceptor in catalysis.

It belongs to the haloalkane dehalogenase family. Type 2 subfamily. As to quaternary structure, monomer.

It localises to the periplasm. The catalysed reaction is 1-haloalkane + H2O = a halide anion + a primary alcohol + H(+). It catalyses the reaction (3R,6R)-1,3,4,6-tetrachlorocyclohexa-1,4-diene + 2 H2O = 2,5-dichlorocyclohexa-2,5-dien-1,4-diol + 2 chloride + 2 H(+). It functions in the pathway xenobiotic degradation; gamma-hexachlorocyclohexane degradation. Catalyzes hydrolytic cleavage of carbon-halogen bonds in halogenated aliphatic compounds, leading to the formation of the corresponding primary alcohols, halide ions and protons. Is involved in the degradation of the important environmental pollutant gamma-hexachlorocyclohexane (gamma-HCH or lindane) as it also catalyzes conversion of 1,3,4,6-tetrachloro-1,4-cyclohexadiene (1,4-TCDN) to 2,5-dichloro-2,5-cyclohexadiene-1,4-diol (2,5-DDOL) via the intermediate 2,4,5-trichloro-2,5-cyclohexadiene-1-ol (2,4,5-DNOL). In Sphingobium indicum (strain DSM 16412 / CCM 7286 / MTCC 6364 / B90A), this protein is Haloalkane dehalogenase.